Consider the following 792-residue polypeptide: Protein SEY1 homolog 2 (792 aa).

Residues Met-1–Gln-638 lie on the Cytoplasmic side of the membrane. A GB1/RHD3-type G domain is found at Gly-28 to Ser-245. Residue Gly-38 to Ser-45 coordinates GTP. A helical transmembrane segment spans residues Ile-639 to Leu-659. Over Ala-660 to Pro-662 the chain is Lumenal. A helical membrane pass occupies residues Ile-663–Leu-683. Over Gln-684–Met-792 the chain is Cytoplasmic. Positions Leu-691–Glu-718 form a coiled coil. The disordered stretch occupies residues Thr-703 to Met-792. Positions Asn-707–Gln-723 are enriched in acidic residues. 2 stretches are compositionally biased toward polar residues: residues Ser-739–Lys-751 and Ile-764–Asp-774.

The protein belongs to the TRAFAC class dynamin-like GTPase superfamily. GB1/RHD3 GTPase family. RHD3 subfamily.

Its subcellular location is the endoplasmic reticulum membrane. Probable GTP-binding protein that may be involved in cell development. This Trichomonas vaginalis (strain ATCC PRA-98 / G3) protein is Protein SEY1 homolog 2.